We begin with the raw amino-acid sequence, 395 residues long: Inner membrane protein YjgN (395 aa).

Topologically, residues 1–24 (MNNVISSKDNHNHTLVFTGKGGKY) are cytoplasmic. The chain crosses the membrane as a helical span at residues 25–45 (FVICLVNFLLTCITLGIYAPW). Topologically, residues 46–71 (AMVKCRRYIYTNMTLNNQPFAYKATG) are periplasmic. Residues 72–92 (GALFISVLLVFIIYIVSLSLI) form a helical membrane-spanning segment. Residues 93-95 (EHG) lie on the Cytoplasmic side of the membrane. The helical transmembrane segment at 96–116 (HPGLGFTLFGLLIAIIPFMAV) threads the bilayer. Residues 117–146 (KGLQYQAMMTSLNGVHFGFQCSMRRAWWYM) lie on the Periplasmic side of the membrane. A helical transmembrane segment spans residues 147–167 (FALPVLLMVALYIVLYIISLV). A topological domain (cytoplasmic) is located at residue T168. The chain crosses the membrane as a helical span at residues 169-189 (IAVGGLVFSIVFLGLLAIIGI). Residues 190 to 229 (GVINGITYSKWMTLFGNGANFGIHRFSIQVNVKTCIRGCV) are Periplasmic-facing. Residues 230–250 (LAMLTLFPFAVVIGYLIAPVF) traverse the membrane as a helical segment. Topologically, residues 251–275 (TDMILLSMMGNAQAGGALILQYYGQ) are cytoplasmic. A helical transmembrane segment spans residues 276–296 (IMACYFLYFLAIIVVTSYLYV). The Periplasmic segment spans residues 297–327 (ALRNLFLNNLSLANDSIRFHSSVTAHGMLWR). A helical membrane pass occupies residues 328–348 (LLVVFVISGVTLGLAYPWLKI). Topologically, residues 349–395 (WLVSWLAQNTQVQGDLDSLELTNDEKPLENSPLMWISRGIMPYFPFI) are cytoplasmic.

The protein resides in the cell inner membrane. This Salmonella typhimurium (strain LT2 / SGSC1412 / ATCC 700720) protein is Inner membrane protein YjgN (yjgN).